We begin with the raw amino-acid sequence, 535 residues long: MKQSSNVPAFLSKLWTLVEETHTNEFITWSQNGQSFLVLDEQRFAKEILPKYFKHNNMASFVRQLNMYGFRKVVHIESGIIKQERDGPVEFQHPYFKQGQDDLLENIKRKVSSSKPEENKIRQEDLTKIISSAQKVQIKQETIESRLSELKSENESLWKEVSELRAKHAQQQQVIRKIVQFIVTLVQNNQLVSLKRKRPLLLNTNGAPKKNLYQHIVKEPTDNHHHKVPHSRTEGLKSRERISDDIIIYDVTDDNVDEENIPVIPETNEDVVVDSSNQYPDIVIVEDDNEDEYAPVIQSGEQSEPAREPLRVGSAGSSSPLMSSAVQLNGSSSLTSEDPVTMMDSILNDNINLLGKVELLDYLDSIDCSLEDFQAMLSGRQFSIDPDLLVDLFTSSVQMNPTDNIKYTKSENKGLEATKSSVVQHVSEEGRKSKSKPDKQLIQYTAFPLLAFLDGNSASAIEQGSTTASSEVVPSVDKPIEVDELLDSSLDPEPTQSKLVRLEPLTEAEASEATLFYLCELAPAPLDSDMPLLDS.

Glycyl lysine isopeptide (Lys-Gly) (interchain with G-Cter in SUMO2) cross-links involve residues lysine 2, lysine 82, lysine 135, lysine 139, lysine 151, lysine 210, lysine 218, and lysine 237. Residues 7-112 (VPAFLSKLWT…LLENIKRKVS (106 aa)) mediate DNA binding. Positions 119–192 (NKIRQEDLTK…VTLVQNNQLV (74 aa)) are hydrophobic repeat HR-A/B. Positions 298-325 (QSGEQSEPAREPLRVGSAGSSSPLMSSA) are disordered. Low complexity predominate over residues 313 to 325 (GSAGSSSPLMSSA). The tract at residues 359–384 (LLDYLDSIDCSLEDFQAMLSGRQFSI) is hydrophobic repeat HR-C. A disordered region spans residues 418–437 (TKSSVVQHVSEEGRKSKSKP). Over residues 426–437 (VSEEGRKSKSKP) the composition is skewed to basic and acidic residues.

The protein belongs to the HSF family. DNA-binding homotrimer in stressed or heat shocked cells, otherwise found as a homodimer. Isoform alpha is expressed predominantly in testis while isoform beta is expressed predominantly in heart and brain.

The protein resides in the cytoplasm. Its subcellular location is the nucleus. Its function is as follows. DNA-binding protein that specifically binds heat shock promoter elements (HSE) and activates transcription. In higher eukaryotes, HSF is unable to bind to the HSE unless the cells are heat shocked. HSF2 is expressed in a form that binds DNA constitutively but loses DNA binding by incubation at greater than 41 degrees C. The chain is Heat shock factor protein 2 (Hsf2) from Mus musculus (Mouse).